The following is a 128-amino-acid chain: Large ribosomal subunit protein bL17 (128 aa).

It belongs to the bacterial ribosomal protein bL17 family. Part of the 50S ribosomal subunit. Contacts protein L32.

In Ehrlichia ruminantium (strain Gardel), this protein is Large ribosomal subunit protein bL17.